Consider the following 540-residue polypeptide: Probable tubulin polyglutamylase TTLL2 (540 aa).

Positions 41 to 384 (LKPLVFRVDE…NGLRSEEKKC (344 aa)) constitute a TTL domain. Residues K169, 175–176 (RG), 197–200 (QKYI), and 210–212 (KCD) contribute to the ATP site. An a protein-binding site is contributed by R175. R236 serves as a coordination point for L-glutamate. 255 to 256 (TN) provides a ligand contact to ATP. The L-glutamate site is built by S258 and K278. Mg(2+) is bound by residues D330, E343, and N345. K361 lines the L-glutamate pocket. The tract at residues 479–499 (SQSQPHKMKGPAGDLPEAGST) is disordered.

This sequence belongs to the tubulin--tyrosine ligase family. Mg(2+) is required as a cofactor. In terms of tissue distribution, highly expressed in brain, kidney, liver and testis. Expressed in heart, lung, muscle and spleen.

Functionally, probable tubulin polyglutamylase that generates side chains of glutamate on the gamma-carboxyl group of specific glutamate residues within the C-terminal tail of target proteins. Similar to TTLL1, may acquire enzymatic activity only in complex with other proteins as it is most likely lacking domains important for autonomous activity. Probably involved in the side-chain initiation step of the polyglutamylation reaction rather than the elongation step. The chain is Probable tubulin polyglutamylase TTLL2 from Mus musculus (Mouse).